A 37-amino-acid chain; its full sequence is MANEGDVYKCELCGQVVKVLEEGGGTLVCCGEDMVKQ.

4 residues coordinate Fe cation: cysteine 10, cysteine 13, cysteine 29, and cysteine 30.

This sequence to the N-terminal section of desulfoferrodoxin. In terms of assembly, homodimer. Requires Fe cation as cofactor.

Functionally, nonheme iron protein possibly involved in electron transport. The protein is Desulforedoxin (dsr) of Megalodesulfovibrio gigas (Desulfovibrio gigas).